We begin with the raw amino-acid sequence, 284 residues long: Bifunctional protein FolD (284 aa).

NADP(+) contacts are provided by residues 164 to 166 and Ile-230; that span reads GTS.

This sequence belongs to the tetrahydrofolate dehydrogenase/cyclohydrolase family. Homodimer.

The enzyme catalyses (6R)-5,10-methylene-5,6,7,8-tetrahydrofolate + NADP(+) = (6R)-5,10-methenyltetrahydrofolate + NADPH. The catalysed reaction is (6R)-5,10-methenyltetrahydrofolate + H2O = (6R)-10-formyltetrahydrofolate + H(+). It participates in one-carbon metabolism; tetrahydrofolate interconversion. In terms of biological role, catalyzes the oxidation of 5,10-methylenetetrahydrofolate to 5,10-methenyltetrahydrofolate and then the hydrolysis of 5,10-methenyltetrahydrofolate to 10-formyltetrahydrofolate. The protein is Bifunctional protein FolD of Mycoplasma capricolum subsp. capricolum (strain California kid / ATCC 27343 / NCTC 10154).